Consider the following 98-residue polypeptide: NADH-ubiquinone oxidoreductase chain 4L (98 aa).

3 helical membrane passes run Met-1–Met-21, Leu-26–Leu-46, and Ile-61–Ile-81.

The protein belongs to the complex I subunit 4L family. As to quaternary structure, core subunit of respiratory chain NADH dehydrogenase (Complex I) which is composed of 45 different subunits.

It localises to the mitochondrion inner membrane. It carries out the reaction a ubiquinone + NADH + 5 H(+)(in) = a ubiquinol + NAD(+) + 4 H(+)(out). Functionally, core subunit of the mitochondrial membrane respiratory chain NADH dehydrogenase (Complex I) which catalyzes electron transfer from NADH through the respiratory chain, using ubiquinone as an electron acceptor. Part of the enzyme membrane arm which is embedded in the lipid bilayer and involved in proton translocation. The protein is NADH-ubiquinone oxidoreductase chain 4L (MT-ND4L) of Physeter macrocephalus (Sperm whale).